Reading from the N-terminus, the 179-residue chain is MIIYKDIISGDEVLSDTYNIKTVDGVLYECDCRKYLKKTNEDFELEGANPSAEGGDDEGGAEGGEVMVHDIEDQFRLVWLKAEDGAKPPKDAFKGHLKTYMKKVLKALQDKGAPDETINEFKKGAPAAVNKILKNYDNYDVLMGESMDGDAMHILIDFREDGVTPYATLWKHGLEEMKV.

Positions 1-179 constitute a TCTP domain; the sequence is MIIYKDIISG…WKHGLEEMKV (179 aa).

It belongs to the TCTP family.

The protein localises to the cytoplasm. The protein resides in the cytoskeleton. Its function is as follows. Involved in protein synthesis. Involved in microtubule stabilization. Involved in osmoadaptation. This chain is Translationally-controlled tumor protein homolog, found in Emericella nidulans (strain FGSC A4 / ATCC 38163 / CBS 112.46 / NRRL 194 / M139) (Aspergillus nidulans).